A 299-amino-acid polypeptide reads, in one-letter code: ATP phosphoribosyltransferase (299 aa).

Belongs to the ATP phosphoribosyltransferase family. Long subfamily. Equilibrium between an active dimeric form, an inactive hexameric form and higher aggregates. Interconversion between the various forms is largely reversible and is influenced by the natural substrates and inhibitors of the enzyme. The cofactor is Mg(2+).

It localises to the cytoplasm. The enzyme catalyses 1-(5-phospho-beta-D-ribosyl)-ATP + diphosphate = 5-phospho-alpha-D-ribose 1-diphosphate + ATP. It functions in the pathway amino-acid biosynthesis; L-histidine biosynthesis; L-histidine from 5-phospho-alpha-D-ribose 1-diphosphate: step 1/9. Its activity is regulated as follows. Feedback inhibited by histidine. Its function is as follows. Catalyzes the condensation of ATP and 5-phosphoribose 1-diphosphate to form N'-(5'-phosphoribosyl)-ATP (PR-ATP). Has a crucial role in the pathway because the rate of histidine biosynthesis seems to be controlled primarily by regulation of HisG enzymatic activity. The chain is ATP phosphoribosyltransferase from Pectobacterium carotovorum subsp. carotovorum (strain PC1).